The chain runs to 275 residues: Membrane protein insertase MisCB (275 aa).

The N-terminal stretch at 1 to 18 (MLKTYQKLLAMGIFLIVL) is a signal peptide. Residue cysteine 19 is the site of N-palmitoyl cysteine attachment. Cysteine 19 carries S-diacylglycerol cysteine lipidation. The next 5 membrane-spanning stretches (helical) occupy residues 63–83 (YGLSIILVTIIVRIVVLPLFV), 139–159 (AMGCLPMLIQSPIMIGLYYAI), 172–192 (WFSLGQSDILMSLSAGIMYFV), 219–239 (LMVFIFPVMMTIFSLNVPAAL), and 240–260 (PLYWFTSGLFLTVQNIVLQMT).

Belongs to the OXA1/ALB3/YidC family. Type 2 subfamily. As to quaternary structure, mostly monomeric, it may also form dimers. Interacts with SpoIIIAE. Forms a complex with the F(1)F(0) ATP synthase in which can be found the alpha, beta, gamma, delta and epsilon subunits of F(1) and a, b and subunits of F(0). YqgA is found in the same complex.

The protein localises to the cell membrane. Functionally, required for the insertion and/or proper folding and/or complex formation of integral membrane proteins into the membrane. Involved in integration of membrane proteins that insert both dependently and independently of the Sec translocase complex, as well as at least some lipoproteins. Also involved in protein secretion processes. It has an overlapping, although partly distinct, function compared to SpoIIIJ(MisCB). The polypeptide is Membrane protein insertase MisCB (misCB) (Bacillus subtilis (strain 168)).